The following is a 369-amino-acid chain: Terpene cyclase DEP1 (369 aa).

Helical transmembrane passes span 9 to 29 (FFYL…FNGM), 82 to 102 (LLFF…LIES), 118 to 138 (AMVL…LYLV), 157 to 177 (ALLV…VPAW), 190 to 210 (IALF…LASI), 234 to 254 (LVLA…GALI), 298 to 318 (LFSQ…SHLL), and 342 to 362 (LVYL…SFAL).

Belongs to the membrane-bound ascI terpene cyclase family.

Its subcellular location is the membrane. The protein operates within polyketide biosynthesis. Functionally, part of the gene cluster that mediates the biosynthesis of depudecin, a highly oxidized eleven-carbon linear polyketide that acts as a histone deacetylase (HDAC) inhibitor and makes a small contribution to pathogenesis. The reducing polyketide synthase DEP5 is the central enzyme in depudecin biosynthesis by yielding the backbone polyketide chain. The monooxygenases DEP2 and DEP4, as well as the uncharacterized protein DEP1, then act as tailoring enzymes to modify the intermediate polyketide chain into depudecin. The sequence is that of Terpene cyclase DEP1 from Alternaria brassicicola (Dark leaf spot agent).